We begin with the raw amino-acid sequence, 66 residues long: Large ribosomal subunit protein bL35 (66 aa).

The disordered stretch occupies residues 22–41 (VMSAQRGKRHGMIKRTKKQI). Residues 27 to 41 (RGKRHGMIKRTKKQI) are compositionally biased toward basic residues.

It belongs to the bacterial ribosomal protein bL35 family.

The polypeptide is Large ribosomal subunit protein bL35 (Rhodopseudomonas palustris (strain TIE-1)).